A 441-amino-acid polypeptide reads, in one-letter code: Ribulose bisphosphate carboxylase large chain (441 aa).

The residue at position 4 (lysine 4) is an N6,N6,N6-trimethyllysine. Substrate contacts are provided by asparagine 113 and threonine 163. Catalysis depends on lysine 165, which acts as the Proton acceptor. Lysine 167 is a binding site for substrate. Mg(2+)-binding residues include lysine 191, aspartate 193, and glutamate 194. At lysine 191 the chain carries N6-carboxylysine. Histidine 284 acts as the Proton acceptor in catalysis. The substrate site is built by arginine 285, histidine 317, and serine 369.

The protein belongs to the RuBisCO large chain family. Type I subfamily. Heterohexadecamer of 8 large chains and 8 small chains; disulfide-linked. The disulfide link is formed within the large subunit homodimers. It depends on Mg(2+) as a cofactor. Post-translationally, the disulfide bond which can form in the large chain dimeric partners within the hexadecamer appears to be associated with oxidative stress and protein turnover.

The protein localises to the plastid. It is found in the chloroplast. The catalysed reaction is 2 (2R)-3-phosphoglycerate + 2 H(+) = D-ribulose 1,5-bisphosphate + CO2 + H2O. It catalyses the reaction D-ribulose 1,5-bisphosphate + O2 = 2-phosphoglycolate + (2R)-3-phosphoglycerate + 2 H(+). Its function is as follows. RuBisCO catalyzes two reactions: the carboxylation of D-ribulose 1,5-bisphosphate, the primary event in carbon dioxide fixation, as well as the oxidative fragmentation of the pentose substrate in the photorespiration process. Both reactions occur simultaneously and in competition at the same active site. The chain is Ribulose bisphosphate carboxylase large chain from Darlingtonia californica (California pitcher plant).